The primary structure comprises 286 residues: ATP synthase gamma chain (286 aa).

This sequence belongs to the ATPase gamma chain family. F-type ATPases have 2 components, CF(1) - the catalytic core - and CF(0) - the membrane proton channel. CF(1) has five subunits: alpha(3), beta(3), gamma(1), delta(1), epsilon(1). CF(0) has three main subunits: a, b and c.

Its subcellular location is the cell membrane. Functionally, produces ATP from ADP in the presence of a proton gradient across the membrane. The gamma chain is believed to be important in regulating ATPase activity and the flow of protons through the CF(0) complex. This chain is ATP synthase gamma chain, found in Bacillus cereus (strain G9842).